The chain runs to 194 residues: Imidazole glycerol phosphate synthase subunit HisH (194 aa).

The Glutamine amidotransferase type-1 domain occupies 3-194; the sequence is RIAIVDLGIG…LILLRNFRRL (192 aa). Cysteine 74 acts as the Nucleophile in catalysis. Active-site residues include histidine 176 and glutamate 178.

As to quaternary structure, heterodimer of HisH and HisF.

The protein resides in the cytoplasm. The enzyme catalyses 5-[(5-phospho-1-deoxy-D-ribulos-1-ylimino)methylamino]-1-(5-phospho-beta-D-ribosyl)imidazole-4-carboxamide + L-glutamine = D-erythro-1-(imidazol-4-yl)glycerol 3-phosphate + 5-amino-1-(5-phospho-beta-D-ribosyl)imidazole-4-carboxamide + L-glutamate + H(+). It carries out the reaction L-glutamine + H2O = L-glutamate + NH4(+). The protein operates within amino-acid biosynthesis; L-histidine biosynthesis; L-histidine from 5-phospho-alpha-D-ribose 1-diphosphate: step 5/9. Its function is as follows. IGPS catalyzes the conversion of PRFAR and glutamine to IGP, AICAR and glutamate. The HisH subunit catalyzes the hydrolysis of glutamine to glutamate and ammonia as part of the synthesis of IGP and AICAR. The resulting ammonia molecule is channeled to the active site of HisF. The chain is Imidazole glycerol phosphate synthase subunit HisH from Pyrococcus furiosus (strain ATCC 43587 / DSM 3638 / JCM 8422 / Vc1).